The following is a 320-amino-acid chain: Heterogeneous nuclear ribonucleoprotein A1-like 3 (320 aa).

2 consecutive RRM domains span residues 14-97 (RKLF…DSQR) and 105-184 (KKIF…LSKQ). Disordered regions lie at residues 182–218 (SKQE…NFGR) and 271–320 (SNFG…GRRF). A compositionally biased stretch (gly residues) spans 197 to 218 (SGSGNFGGGRGGGFGGNDNFGR). Over residues 308–320 (SSSSSSYGSGRRF) the composition is skewed to low complexity.

This Homo sapiens (Human) protein is Heterogeneous nuclear ribonucleoprotein A1-like 3.